The primary structure comprises 355 residues: Holliday junction branch migration complex subunit RuvB (355 aa).

The tract at residues 4 to 190 is large ATPase domain (RuvB-L); it reads TDKLAAERII…FGIVARLEFY (187 aa). ATP-binding positions include Leu-29, Arg-30, Gly-71, Lys-74, Thr-75, Thr-76, 137 to 139, Arg-180, Tyr-190, and Arg-227; that span reads EDY. Thr-75 is a Mg(2+) binding site. The interval 191 to 261 is small ATPAse domain (RuvB-S); it reads DAEQLSRIVR…VADAALAMLD (71 aa). Positions 264–355 are head domain (RuvB-H); sequence PVGFDLMDRK…GSMWNTPDGA (92 aa). Residues Arg-300, Arg-319, and Arg-324 each contribute to the DNA site.

Belongs to the RuvB family. In terms of assembly, homohexamer. Forms an RuvA(8)-RuvB(12)-Holliday junction (HJ) complex. HJ DNA is sandwiched between 2 RuvA tetramers; dsDNA enters through RuvA and exits via RuvB. An RuvB hexamer assembles on each DNA strand where it exits the tetramer. Each RuvB hexamer is contacted by two RuvA subunits (via domain III) on 2 adjacent RuvB subunits; this complex drives branch migration. In the full resolvosome a probable DNA-RuvA(4)-RuvB(12)-RuvC(2) complex forms which resolves the HJ.

It is found in the cytoplasm. It catalyses the reaction ATP + H2O = ADP + phosphate + H(+). In terms of biological role, the RuvA-RuvB-RuvC complex processes Holliday junction (HJ) DNA during genetic recombination and DNA repair, while the RuvA-RuvB complex plays an important role in the rescue of blocked DNA replication forks via replication fork reversal (RFR). RuvA specifically binds to HJ cruciform DNA, conferring on it an open structure. The RuvB hexamer acts as an ATP-dependent pump, pulling dsDNA into and through the RuvAB complex. RuvB forms 2 homohexamers on either side of HJ DNA bound by 1 or 2 RuvA tetramers; 4 subunits per hexamer contact DNA at a time. Coordinated motions by a converter formed by DNA-disengaged RuvB subunits stimulates ATP hydrolysis and nucleotide exchange. Immobilization of the converter enables RuvB to convert the ATP-contained energy into a lever motion, pulling 2 nucleotides of DNA out of the RuvA tetramer per ATP hydrolyzed, thus driving DNA branch migration. The RuvB motors rotate together with the DNA substrate, which together with the progressing nucleotide cycle form the mechanistic basis for DNA recombination by continuous HJ branch migration. Branch migration allows RuvC to scan DNA until it finds its consensus sequence, where it cleaves and resolves cruciform DNA. This chain is Holliday junction branch migration complex subunit RuvB, found in Burkholderia vietnamiensis (strain G4 / LMG 22486) (Burkholderia cepacia (strain R1808)).